The following is a 232-amino-acid chain: Large ribosomal subunit protein uL1 (232 aa).

This sequence belongs to the universal ribosomal protein uL1 family. As to quaternary structure, part of the 50S ribosomal subunit.

In terms of biological role, binds directly to 23S rRNA. The L1 stalk is quite mobile in the ribosome, and is involved in E site tRNA release. Its function is as follows. Protein L1 is also a translational repressor protein, it controls the translation of the L11 operon by binding to its mRNA. This chain is Large ribosomal subunit protein uL1, found in Xanthomonas axonopodis pv. citri (strain 306).